Reading from the N-terminus, the 195-residue chain is Exosome complex component CSL4 (195 aa).

Phosphoserine is present on Ser21. The region spanning 66-147 is the S1 motif domain; that stretch reads DVGAVVTCKV…AQSNYLLTTA (82 aa).

This sequence belongs to the CSL4 family. In terms of assembly, component of the RNA exosome core complex (Exo-9), composed of EXOSC1, EXOSC2, EXOSC3, EXOSC4, EXOSC5, EXOSC6, EXOSC7, EXOSC8 and EXOSC9; within the complex interacts with EXOSC6. The catalytically inactive RNA exosome core complex (Exo-9) associates with the catalytic subunit EXOSC10/RRP6. Exo-9 may associate with DIS3 to form the nucleolar exosome complex, or DIS3L to form the cytoplasmic exosome complex. Exo-9 is formed by a hexameric base ring consisting of the heterodimers EXOSC4-EXOSC9, EXOSC5-EXOSC8 and EXOSC6-EXOSC7, and a cap ring consisting of EXOSC1, EXOSC2 and EXOSC3. The RNA exosome complex associates with cofactors C1D/RRP47, MPHOSPH6/MPP6 and MTREX/MTR4. Interacts with DDX60.

It is found in the nucleus. The protein localises to the nucleolus. Its subcellular location is the cytoplasm. Functionally, non-catalytic component of the RNA exosome complex which has 3'-&gt;5' exoribonuclease activity and participates in a multitude of cellular RNA processing and degradation events. In the nucleus, the RNA exosome complex is involved in proper maturation of stable RNA species such as rRNA, snRNA and snoRNA, in the elimination of RNA processing by-products and non-coding 'pervasive' transcripts, such as antisense RNA species and promoter-upstream transcripts (PROMPTs), and of mRNAs with processing defects, thereby limiting or excluding their export to the cytoplasm. The RNA exosome may be involved in Ig class switch recombination (CSR) and/or Ig variable region somatic hypermutation (SHM) by targeting AICDA deamination activity to transcribed dsDNA substrates. In the cytoplasm, the RNA exosome complex is involved in general mRNA turnover and specifically degrades inherently unstable mRNAs containing AU-rich elements (AREs) within their 3' untranslated regions, and in RNA surveillance pathways, preventing translation of aberrant mRNAs. It seems to be involved in degradation of histone mRNA. The catalytic inactive RNA exosome core complex of 9 subunits (Exo-9) is proposed to play a pivotal role in the binding and presentation of RNA for ribonucleolysis, and to serve as a scaffold for the association with catalytic subunits and accessory proteins or complexes. EXOSC1 as peripheral part of the Exo-9 complex stabilizes the hexameric ring of RNase PH-domain subunits through contacts with EXOSC6 and EXOSC8. This is Exosome complex component CSL4 (Exosc1) from Mus musculus (Mouse).